A 549-amino-acid polypeptide reads, in one-letter code: 65-kDa microtubule-associated protein 9 (549 aa).

Coiled-coil stretches lie at residues 36–123, 160–199, and 459–492; these read IEIE…ERKI, SLRK…CSVL, and GNRL…HQGQ. A disordered region spans residues 474 to 549; it reads EEKEQERRRK…SFSTPLSRHG (76 aa). Basic residues predominate over residues 481–490; it reads RRKRDLKKHQ. A phosphoserine mark is found at serine 501 and serine 546. Residues 514-549 are compositionally biased toward polar residues; the sequence is VSTNKRFVSSPHTPQTDSPHSAKSNQSFSTPLSRHG.

The protein belongs to the MAP65/ASE1 family. As to quaternary structure, forms dimer. Binds to microtubules (MT).

The protein localises to the nucleus. It localises to the cytoplasm. The protein resides in the cytoskeleton. It is found in the spindle pole. This Arabidopsis thaliana (Mouse-ear cress) protein is 65-kDa microtubule-associated protein 9 (MAP65-9).